The primary structure comprises 630 residues: tRNA uridine 5-carboxymethylaminomethyl modification enzyme MnmG (630 aa).

13-18 (GGGHAG) contributes to the FAD binding site. 273–287 (GPRYCPSIEDKVNRF) serves as a coordination point for NAD(+).

The protein belongs to the MnmG family. As to quaternary structure, homodimer. Heterotetramer of two MnmE and two MnmG subunits. It depends on FAD as a cofactor.

The protein localises to the cytoplasm. Its function is as follows. NAD-binding protein involved in the addition of a carboxymethylaminomethyl (cmnm) group at the wobble position (U34) of certain tRNAs, forming tRNA-cmnm(5)s(2)U34. The protein is tRNA uridine 5-carboxymethylaminomethyl modification enzyme MnmG of Teredinibacter turnerae (strain ATCC 39867 / T7901).